The following is a 216-amino-acid chain: MLAIKTRVKTAKGRKLSSTRWLHRHLNDQYVQKTNKDSYRSRSAYKLIEIDNKFKLLQAGQKIVDLGASPGGWSQVASQKGVKVVAIDIKPVNTISGVKYIQYDINELETLRERFKDQKFDVILSDMAPESCGLKSLDHIRIMLLCEAALNFAKHFLNYGGKFVVKIFQGESDKDFYNELKKMFKIVKYFKPKSSRSESTEMYLVGLGFISNSFPI.

Residues Gly-71, Trp-73, Asp-88, Asp-104, and Asp-126 each coordinate S-adenosyl-L-methionine. The Proton acceptor role is filled by Lys-166.

The protein belongs to the class I-like SAM-binding methyltransferase superfamily. RNA methyltransferase RlmE family.

It is found in the cytoplasm. The enzyme catalyses uridine(2552) in 23S rRNA + S-adenosyl-L-methionine = 2'-O-methyluridine(2552) in 23S rRNA + S-adenosyl-L-homocysteine + H(+). Functionally, specifically methylates the uridine in position 2552 of 23S rRNA at the 2'-O position of the ribose in the fully assembled 50S ribosomal subunit. The protein is Ribosomal RNA large subunit methyltransferase E of Wolbachia sp. subsp. Brugia malayi (strain TRS).